Reading from the N-terminus, the 217-residue chain is Phosphatidylserine decarboxylase proenzyme (217 aa).

Residue serine 187 is the Schiff-base intermediate with substrate; via pyruvic acid of the active site. The residue at position 187 (serine 187) is a Pyruvic acid (Ser); by autocatalysis.

The protein belongs to the phosphatidylserine decarboxylase family. PSD-A subfamily. Heterodimer of a large membrane-associated beta subunit and a small pyruvoyl-containing alpha subunit. Pyruvate serves as cofactor. Post-translationally, is synthesized initially as an inactive proenzyme. Formation of the active enzyme involves a self-maturation process in which the active site pyruvoyl group is generated from an internal serine residue via an autocatalytic post-translational modification. Two non-identical subunits are generated from the proenzyme in this reaction, and the pyruvate is formed at the N-terminus of the alpha chain, which is derived from the carboxyl end of the proenzyme. The post-translation cleavage follows an unusual pathway, termed non-hydrolytic serinolysis, in which the side chain hydroxyl group of the serine supplies its oxygen atom to form the C-terminus of the beta chain, while the remainder of the serine residue undergoes an oxidative deamination to produce ammonia and the pyruvoyl prosthetic group on the alpha chain.

The protein resides in the cell membrane. The catalysed reaction is a 1,2-diacyl-sn-glycero-3-phospho-L-serine + H(+) = a 1,2-diacyl-sn-glycero-3-phosphoethanolamine + CO2. The protein operates within phospholipid metabolism; phosphatidylethanolamine biosynthesis; phosphatidylethanolamine from CDP-diacylglycerol: step 2/2. Catalyzes the formation of phosphatidylethanolamine (PtdEtn) from phosphatidylserine (PtdSer). The protein is Phosphatidylserine decarboxylase proenzyme of Thermobifida fusca (strain YX).